We begin with the raw amino-acid sequence, 212 residues long: Urease accessory protein UreG 2 (212 aa).

11-18 (GPVGSGKM) contacts GTP.

It belongs to the SIMIBI class G3E GTPase family. UreG subfamily. In terms of assembly, homodimer. UreD, UreF and UreG form a complex that acts as a GTP-hydrolysis-dependent molecular chaperone, activating the urease apoprotein by helping to assemble the nickel containing metallocenter of UreC. The UreE protein probably delivers the nickel.

Its subcellular location is the cytoplasm. Facilitates the functional incorporation of the urease nickel metallocenter. This process requires GTP hydrolysis, probably effectuated by UreG. Functionally, disrupting the ure2 operon has no effect on urease activity, or pathogen survival in BALB/c mice when inoculated by gavage, but confers slightly enhanced resistance to low pH killing in vitro. This is Urease accessory protein UreG 2 from Brucella suis biovar 1 (strain 1330).